A 689-amino-acid chain; its full sequence is Glycine--tRNA ligase beta subunit (689 aa).

It belongs to the class-II aminoacyl-tRNA synthetase family. In terms of assembly, tetramer of two alpha and two beta subunits.

It is found in the cytoplasm. The catalysed reaction is tRNA(Gly) + glycine + ATP = glycyl-tRNA(Gly) + AMP + diphosphate. This chain is Glycine--tRNA ligase beta subunit, found in Klebsiella pneumoniae subsp. pneumoniae (strain ATCC 700721 / MGH 78578).